A 207-amino-acid polypeptide reads, in one-letter code: Large ribosomal subunit protein bL25 (207 aa).

This sequence belongs to the bacterial ribosomal protein bL25 family. CTC subfamily. In terms of assembly, part of the 50S ribosomal subunit; part of the 5S rRNA/L5/L18/L25 subcomplex. Contacts the 5S rRNA. Binds to the 5S rRNA independently of L5 and L18.

In terms of biological role, this is one of the proteins that binds to the 5S RNA in the ribosome where it forms part of the central protuberance. The chain is Large ribosomal subunit protein bL25 from Orientia tsutsugamushi (strain Boryong) (Rickettsia tsutsugamushi).